Consider the following 517-residue polypeptide: GMP synthase [glutamine-hydrolyzing] (517 aa).

Residues 11-202 (KIIVLDFGSQ…AFDVCGAKDN (192 aa)) enclose the Glutamine amidotransferase type-1 domain. The Nucleophile role is filled by Cys-88. Catalysis depends on residues His-176 and Glu-178. A GMPS ATP-PPase domain is found at 203-392 (WTMDDFIKLS…LGLPHDLVWR (190 aa)). 230–236 (SGGVDSS) provides a ligand contact to ATP.

In terms of assembly, homodimer.

It catalyses the reaction XMP + L-glutamine + ATP + H2O = GMP + L-glutamate + AMP + diphosphate + 2 H(+). It participates in purine metabolism; GMP biosynthesis; GMP from XMP (L-Gln route): step 1/1. Functionally, catalyzes the synthesis of GMP from XMP. This Lactobacillus delbrueckii subsp. bulgaricus (strain ATCC 11842 / DSM 20081 / BCRC 10696 / JCM 1002 / NBRC 13953 / NCIMB 11778 / NCTC 12712 / WDCM 00102 / Lb 14) protein is GMP synthase [glutamine-hydrolyzing].